The sequence spans 379 residues: Anhydro-N-acetylmuramic acid kinase (379 aa).

9–16 (GTSADGVD) lines the ATP pocket.

This sequence belongs to the anhydro-N-acetylmuramic acid kinase family.

The enzyme catalyses 1,6-anhydro-N-acetyl-beta-muramate + ATP + H2O = N-acetyl-D-muramate 6-phosphate + ADP + H(+). The protein operates within amino-sugar metabolism; 1,6-anhydro-N-acetylmuramate degradation. It functions in the pathway cell wall biogenesis; peptidoglycan recycling. Functionally, catalyzes the specific phosphorylation of 1,6-anhydro-N-acetylmuramic acid (anhMurNAc) with the simultaneous cleavage of the 1,6-anhydro ring, generating MurNAc-6-P. Is required for the utilization of anhMurNAc either imported from the medium or derived from its own cell wall murein, and thus plays a role in cell wall recycling. The polypeptide is Anhydro-N-acetylmuramic acid kinase (Parasynechococcus marenigrum (strain WH8102)).